A 431-amino-acid chain; its full sequence is Mannan endo-1,4-beta-mannosidase 5 (431 aa).

The first 24 residues, 1-24 (MVPTRNRPMLRILGFFICAAFIYL), serve as a signal peptide directing secretion. An N-linked (GlcNAc...) asparagine glycan is attached at N45. W97 provides a ligand contact to substrate. N-linked (GlcNAc...) asparagine glycosylation is present at N168. N213 contacts substrate. Residue E214 is the Proton donor of the active site. An N-linked (GlcNAc...) asparagine glycan is attached at N282. Residue Y294 coordinates substrate. N-linked (GlcNAc...) asparagine glycosylation occurs at N301. The active-site Nucleophile is E334. Substrate is bound at residue W376.

Belongs to the glycosyl hydrolase 5 (cellulase A) family. As to expression, expressed in stems.

The protein resides in the secreted. The enzyme catalyses Random hydrolysis of (1-&gt;4)-beta-D-mannosidic linkages in mannans, galactomannans and glucomannans.. The sequence is that of Mannan endo-1,4-beta-mannosidase 5 (MAN5) from Arabidopsis thaliana (Mouse-ear cress).